The chain runs to 339 residues: Annexin A2 (339 aa).

S2 carries the post-translational modification N-acetylserine. Residues 2 to 24 form an S100A10-binding site region; that stretch reads STVHEILCKLSLEGDHSTPPSAY. Residue Y24 is modified to Phosphotyrosine; by SRC. S26 carries the post-translational modification Phosphoserine; by PKC. Annexin repeat units follow at residues 33–104 and 105–176; these read FDAE…GLLK and TPAQ…ALAK. An N6-acetyllysine; alternate modification is found at K49. A Glycyl lysine isopeptide (Lys-Gly) (interchain with G-Cter in SUMO1); alternate cross-link involves residue K49. Residue K49 forms a Glycyl lysine isopeptide (Lys-Gly) (interchain with G-Cter in SUMO2); alternate linkage. K152 carries the N6-acetyllysine modification. S184 is modified (phosphoserine). 2 Annexin repeats span residues 189-261 and 265-336; these read ELID…NLVQ and NKPL…YLCG. Y199 bears the Phosphotyrosine mark. K227 bears the N6-acetyllysine mark.

Belongs to the annexin family. In terms of assembly, heterotetramer containing 2 light chains of S100A10/p11 and 2 heavy chains of ANXA2/p36. Interacts with ATP1B1. Interacts with DYSF. Interacts with COCH. Interacts (via repeat Annexin 1) with PCSK9 (via the C-terminal domain); the interaction inhibits the degradation of LDLR. Interacts with CEACAM1 (via the cytoplasmic domain); this interaction is regulated by phosphorylation of CEACAM1. Interacts with APPL2 and APPL1; targets APPL2 to endosomes and acting in parallel to RAB5A. Interacts with S100A4. May interact with UBAP2. Interacts with PLEKHG4B; this interaction is required for PLEKHG4B localization to cell-cell adhesions. As to quaternary structure, (Microbial infection) Interacts with human cytomegalovirus (HCMV). (Microbial infection) Interacts with M.pneumoniae CARDS toxin; CARDS probably uses this protein as a receptor. A portion of internalized CARDS remains associated with intracellular annexin 2. Post-translationally, phosphorylation of Tyr-24 enhances heat stress-induced translocation to the cell surface. ISGylated.

The protein resides in the secreted. It is found in the extracellular space. The protein localises to the extracellular matrix. Its subcellular location is the basement membrane. It localises to the melanosome. In terms of biological role, calcium-regulated membrane-binding protein whose affinity for calcium is greatly enhanced by anionic phospholipids. It binds two calcium ions with high affinity. May be involved in heat-stress response. Inhibits PCSK9-enhanced LDLR degradation, probably reduces PCSK9 protein levels via a translational mechanism but also competes with LDLR for binding with PCSK9. Binds to endosomes damaged by phagocytosis of particulate wear debris and participates in endosomal membrane stabilization, thereby limiting NLRP3 inflammasome activation. Required for endothelial cell surface plasmin generation and may support fibrinolytic surveillance and neoangiogenesis. Functionally, (Microbial infection) Binds M.pneumoniae CARDS toxin, probably serves as one receptor for this pathogen. When ANXA2 is down-regulated by siRNA, less toxin binds to human cells and less vacuolization (a symptom of M.pneumoniae infection) is seen. The chain is Annexin A2 (ANXA2) from Homo sapiens (Human).